The chain runs to 204 residues: Thymidylate kinase (204 aa).

Residue 12–19 participates in ATP binding; the sequence is GVDGAGKS.

This sequence belongs to the thymidylate kinase family.

It carries out the reaction dTMP + ATP = dTDP + ADP. Phosphorylation of dTMP to form dTDP in both de novo and salvage pathways of dTTP synthesis. The polypeptide is Thymidylate kinase (Thiobacillus denitrificans (strain ATCC 25259 / T1)).